The sequence spans 514 residues: Inosine-5'-monophosphate dehydrogenase (514 aa).

2 CBS domains span residues 112 to 171 (FISK…DTPV) and 175 to 233 (MTRR…PHST). NAD(+) is bound by residues 270 to 272 (DSS) and 320 to 322 (GMG). Residues G322 and G324 each coordinate K(+). S325 contacts IMP. C327 contacts K(+). Catalysis depends on C327, which acts as the Thioimidate intermediate. Residues 360 to 362 (DGG), 383 to 384 (GG), and 407 to 411 (YRGMG) contribute to the IMP site. R425 functions as the Proton acceptor in the catalytic mechanism. Q437 contributes to the IMP binding site. K(+) is bound by residues E496, G497, and G498. The Microbody targeting signal motif lies at 512-514 (AKM).

This sequence belongs to the IMPDH/GMPR family. Heterotetramer. Interacts with glycosomal protein sorting receptor PEX5. Requires K(+) as cofactor.

Its subcellular location is the glycosome. The enzyme catalyses IMP + NAD(+) + H2O = XMP + NADH + H(+). It participates in purine metabolism; XMP biosynthesis via de novo pathway; XMP from IMP: step 1/1. With respect to regulation, mycophenolic acid (MPA) is a non-competitive inhibitor that prevents formation of the closed enzyme conformation by binding to the same site as the amobile flap. In contrast, mizoribine monophosphate (MZP) is a competitive inhibitor that induces the closed conformation. MPA is a potent inhibitor of mammalian IMPDHs but a poor inhibitor of the bacterial enzymes. MZP is a more potent inhibitor of bacterial IMPDH. Potently inhibited by MPA. Inhibited by XMP and GMP. Functionally, catalyzes the conversion of inosine 5'-phosphate (IMP) to xanthosine 5'-phosphate (XMP), the first committed and rate-limiting step in the de novo synthesis of guanine nucleotides, and therefore plays an important role in the regulation of cell growth. This chain is Inosine-5'-monophosphate dehydrogenase, found in Leishmania donovani.